The following is a 288-amino-acid chain: Diaminopimelate epimerase (288 aa).

Positions 14 and 67 each coordinate substrate. The active-site Proton donor is C76. Residues 77-78 (GN), N166, N199, and 217-218 (ER) contribute to the substrate site. C226 serves as the catalytic Proton acceptor. 227-228 (GT) is a binding site for substrate.

The protein belongs to the diaminopimelate epimerase family. In terms of assembly, homodimer.

Its subcellular location is the cytoplasm. It carries out the reaction (2S,6S)-2,6-diaminopimelate = meso-2,6-diaminopimelate. The protein operates within amino-acid biosynthesis; L-lysine biosynthesis via DAP pathway; DL-2,6-diaminopimelate from LL-2,6-diaminopimelate: step 1/1. Functionally, catalyzes the stereoinversion of LL-2,6-diaminopimelate (L,L-DAP) to meso-diaminopimelate (meso-DAP), a precursor of L-lysine and an essential component of the bacterial peptidoglycan. This chain is Diaminopimelate epimerase, found in Bacillus cereus (strain ATCC 10987 / NRS 248).